The following is a 410-amino-acid chain: Platelet-activating factor acetylhydrolase IB subunit beta (410 aa).

The required for self-association and interaction with PAFAH1B2 and PAFAH1B3 stretch occupies residues 1 to 38 (MVLSQRQRDELNRAIADYLRSNGYEEAYSVFKKEAELD). Residues 1–66 (MVLSQRQRDE…SVIRLQKKVM (66 aa)) form an interaction with NDE1 region. The tract at residues 1–102 (MVLSQRQRDE…EWIPRPPEKY (102 aa)) is interaction with NDEL1. The LisH domain maps to 7–39 (QRDELNRAIADYLRSNGYEEAYSVFKKEAELDM). Lys-53 is modified (N6-acetyllysine). Residues 56–82 (TSVIRLQKKVMELESKLNEAKEEFTSG) adopt a coiled-coil conformation. Residues 83–410 (GPLGQKRDPK…DQTVKVWECR (328 aa)) form an interaction with dynein and dynactin region. 7 WD repeats span residues 106-147 (GHRS…RTLK), 148-187 (GHTDSVQDISFDHSGKLLASCSADMTIKLWDFQGFECIRT), 190-229 (GHDHNVSSVAIMPNGDHIVSASRDKTIKMWEVQTGYCVKT), 232-271 (GHREWVRMVRPNQDGTLIASCSNDQTVRVWVVATKECKAE), 274-333 (EHEH…CLMT), 336-377 (GHDN…KTLN), and 378-410 (AHEHFVTSLDFHKTAPYVVTGSVDQTVKVWECR). Phosphoserine is present on Ser-109. Residues 367–409 (YKNKRCMKTLNAHEHFVTSLDFHKTAPYVVTGSVDQTVKVWEC) are interaction with DCX. The interval 388–410 (FHKTAPYVVTGSVDQTVKVWECR) is interaction with NDEL1.

This sequence belongs to the WD repeat LIS1/nudF family. In terms of assembly, can self-associate. Component of the cytosolic PAF-AH (I) heterotetrameric enzyme, which is composed of PAFAH1B1 (beta), PAFAH1B2 (alpha2) and PAFAH1B3 (alpha1) subunits. The catalytic activity of the enzyme resides in the alpha1 (PAFAH1B3) and alpha2 (PAFAH1B2) subunits, whereas the beta subunit (PAFAH1B1) has regulatory activity. Trimer formation is not essential for the catalytic activity. Interacts with the catalytic dimer of PAF-AH (I) heterotetrameric enzyme: interacts with PAFAH1B2 homodimer (alpha2/alpha2 homodimer), PAFAH1B3 homodimer (alpha1/alpha1 homodimer) and PAFAH1B2-PAFAH1B3 heterodimer (alpha2/alpha1 heterodimer). Interacts with DCX, dynein, dynactin, IQGAP1, KATNB1, NDE1, NDEL1, NUDC and RSN. Interacts with DISC1, and this interaction is enhanced by NDEL1. Interacts with DAB1 when DAB1 is phosphorylated in response to RELN/reelin signaling. Interacts with INTS13. Interacts with DCDC1.

It localises to the cytoplasm. The protein localises to the cytoskeleton. It is found in the microtubule organizing center. Its subcellular location is the centrosome. The protein resides in the spindle. It localises to the nucleus membrane. Its function is as follows. Regulatory subunit (beta subunit) of the cytosolic type I platelet-activating factor (PAF) acetylhydrolase (PAF-AH (I)), an enzyme that catalyzes the hydrolyze of the acetyl group at the sn-2 position of PAF and its analogs and participates in PAF inactivation. Regulates the PAF-AH (I) activity in a catalytic dimer composition-dependent manner. Positively regulates the activity of the minus-end directed microtubule motor protein dynein. May enhance dynein-mediated microtubule sliding by targeting dynein to the microtubule plus end. Required for several dynein- and microtubule-dependent processes such as the maintenance of Golgi integrity, the peripheral transport of microtubule fragments and the coupling of the nucleus and centrosome. Required during brain development for the proliferation of neuronal precursors and the migration of newly formed neurons from the ventricular/subventricular zone toward the cortical plate. Neuronal migration involves a process called nucleokinesis, whereby migrating cells extend an anterior process into which the nucleus subsequently translocates. During nucleokinesis dynein at the nuclear surface may translocate the nucleus towards the centrosome by exerting force on centrosomal microtubules. Also required for proper activation of Rho GTPases and actin polymerization at the leading edge of locomoting cerebellar neurons and postmigratory hippocampal neurons in response to calcium influx triggered via NMDA receptors. May also play a role in other forms of cell locomotion including the migration of fibroblasts during wound healing. Required for dynein recruitment to microtubule plus ends and BICD2-bound cargos. May modulate the Reelin pathway through interaction of the PAF-AH (I) catalytic dimer with VLDLR. The chain is Platelet-activating factor acetylhydrolase IB subunit beta from Felis catus (Cat).